We begin with the raw amino-acid sequence, 148 residues long: Lysozyme C (148 aa).

The first 18 residues, Met-1–Ala-18, serve as a signal peptide directing secretion. The C-type lysozyme domain maps to Lys-19–Val-148. 4 disulfide bridges follow: Cys-24-Cys-146, Cys-48-Cys-134, Cys-83-Cys-99, and Cys-95-Cys-113. Residues Glu-53 and Asp-71 contribute to the active site.

Belongs to the glycosyl hydrolase 22 family. In terms of assembly, monomer.

The protein localises to the secreted. The catalysed reaction is Hydrolysis of (1-&gt;4)-beta-linkages between N-acetylmuramic acid and N-acetyl-D-glucosamine residues in a peptidoglycan and between N-acetyl-D-glucosamine residues in chitodextrins.. In terms of biological role, lysozymes have primarily a bacteriolytic function; those in tissues and body fluids are associated with the monocyte-macrophage system and enhance the activity of immunoagents. This is Lysozyme C (LYZ) from Hylobates lar (Lar gibbon).